Consider the following 249-residue polypeptide: Cell surface glycoprotein CD200 receptor 2 (249 aa).

The N-terminal stretch at 1 to 24 is a signal peptide; the sequence is MHALGRTPALTLLIFIYNFVSVYT. The Ig-like V-type domain maps to 25–124; that stretch reads IVSVQMGTKA…GNFHKVYDLQ (100 aa). Residues 25 to 220 are Extracellular-facing; that stretch reads IVSVQMGTKA…TTSTTPSLLT (196 aa). A disulfide bridge links C38 with C108. 3 N-linked (GlcNAc...) asparagine glycosylation sites follow: N73, N138, and N171. An Ig-like C2-type domain is found at 113–208; it reads PEGNFHKVYD…GNQSLSIELS (96 aa). Residues C143 and C192 are joined by a disulfide bond. Residues 221–241 form a helical membrane-spanning segment; that stretch reads ILYVKMVLLGIILLKVGFAFF. At 242 to 249 the chain is on the cytoplasmic side; that stretch reads QKRNVTRT.

Belongs to the CD200R family. Expressed in bone marrow, spleen, brain, lung, testis and thymus.

Its subcellular location is the membrane. Its function is as follows. According to PubMed:15187158 it is a receptor for the CD200 cell surface glycoprotein. According to PubMed:16081818 it is not a receptor for the CD200/OX2 cell surface glycoprotein. Involved in the recruitment or surface expression of the TYROBP receptor. This is Cell surface glycoprotein CD200 receptor 2 (Cd200r1l) from Mus musculus (Mouse).